The sequence spans 589 residues: Isocitrate dehydrogenase kinase/phosphatase (589 aa).

ATP contacts are provided by residues 322–328 (APGIRGL) and Lys343. Residue Asp378 is part of the active site.

It belongs to the AceK family.

The protein localises to the cytoplasm. It catalyses the reaction L-seryl-[isocitrate dehydrogenase] + ATP = O-phospho-L-seryl-[isocitrate dehydrogenase] + ADP + H(+). Functionally, bifunctional enzyme which can phosphorylate or dephosphorylate isocitrate dehydrogenase (IDH) on a specific serine residue. This is a regulatory mechanism which enables bacteria to bypass the Krebs cycle via the glyoxylate shunt in response to the source of carbon. When bacteria are grown on glucose, IDH is fully active and unphosphorylated, but when grown on acetate or ethanol, the activity of IDH declines drastically concomitant with its phosphorylation. This Azoarcus sp. (strain BH72) protein is Isocitrate dehydrogenase kinase/phosphatase.